We begin with the raw amino-acid sequence, 427 residues long: Enolase (427 aa).

Glutamine 163 is a (2R)-2-phosphoglycerate binding site. Glutamate 205 (proton donor) is an active-site residue. Mg(2+) contacts are provided by aspartate 242, glutamate 285, and aspartate 312. Residues lysine 337, arginine 366, serine 367, and lysine 388 each contribute to the (2R)-2-phosphoglycerate site. Lysine 337 acts as the Proton acceptor in catalysis.

It belongs to the enolase family. It depends on Mg(2+) as a cofactor.

The protein localises to the cytoplasm. It localises to the secreted. It is found in the cell surface. It catalyses the reaction (2R)-2-phosphoglycerate = phosphoenolpyruvate + H2O. The protein operates within carbohydrate degradation; glycolysis; pyruvate from D-glyceraldehyde 3-phosphate: step 4/5. Catalyzes the reversible conversion of 2-phosphoglycerate (2-PG) into phosphoenolpyruvate (PEP). It is essential for the degradation of carbohydrates via glycolysis. The protein is Enolase of Paraburkholderia xenovorans (strain LB400).